A 316-amino-acid polypeptide reads, in one-letter code: L-lactate dehydrogenase 3 (316 aa).

Residues Val-16, Asp-37, Arg-42, and Tyr-68 each coordinate NAD(+). Arg-91 contributes to the substrate binding site. Residues Ser-104, 121 to 123 (ASN), and Thr-146 contribute to the NAD(+) site. Residue 123–126 (NPVD) participates in substrate binding. A substrate-binding site is contributed by 151 to 154 (DSSR). Beta-D-fructose 1,6-bisphosphate is bound by residues Arg-156 and His-171. His-178 acts as the Proton acceptor in catalysis. Thr-233 is a binding site for substrate.

This sequence belongs to the LDH/MDH superfamily. LDH family. In terms of assembly, homotetramer.

The protein resides in the cytoplasm. It carries out the reaction (S)-lactate + NAD(+) = pyruvate + NADH + H(+). The protein operates within fermentation; pyruvate fermentation to lactate; (S)-lactate from pyruvate: step 1/1. Allosterically activated by fructose 1,6-bisphosphate (FBP). In terms of biological role, catalyzes the conversion of lactate to pyruvate. The polypeptide is L-lactate dehydrogenase 3 (Bacillus anthracis).